The following is a 245-amino-acid chain: Carboxy-S-adenosyl-L-methionine synthase (245 aa).

Residues tyrosine 39, 64–66, 117–118, and arginine 199 contribute to the S-adenosyl-L-methionine site; these read GSS and DI.

This sequence belongs to the class I-like SAM-binding methyltransferase superfamily. Cx-SAM synthase family. As to quaternary structure, homodimer.

The enzyme catalyses prephenate + S-adenosyl-L-methionine = carboxy-S-adenosyl-L-methionine + 3-phenylpyruvate + H2O. In terms of biological role, catalyzes the conversion of S-adenosyl-L-methionine (SAM) to carboxy-S-adenosyl-L-methionine (Cx-SAM). The protein is Carboxy-S-adenosyl-L-methionine synthase of Desulfotalea psychrophila (strain LSv54 / DSM 12343).